A 264-amino-acid polypeptide reads, in one-letter code: Thymidylate synthase (264 aa).

Residue Arg21 participates in dUMP binding. Position 51 (His51) interacts with (6R)-5,10-methylene-5,6,7,8-tetrahydrofolate. Residue 126 to 127 (RR) coordinates dUMP. The active-site Nucleophile is Cys146. Residues 166–169 (RSAD), Asn177, and 207–209 (HIY) each bind dUMP. Position 169 (Asp169) interacts with (6R)-5,10-methylene-5,6,7,8-tetrahydrofolate. Ala263 contributes to the (6R)-5,10-methylene-5,6,7,8-tetrahydrofolate binding site.

This sequence belongs to the thymidylate synthase family. Bacterial-type ThyA subfamily. Homodimer.

The protein localises to the cytoplasm. It catalyses the reaction dUMP + (6R)-5,10-methylene-5,6,7,8-tetrahydrofolate = 7,8-dihydrofolate + dTMP. The protein operates within pyrimidine metabolism; dTTP biosynthesis. Its function is as follows. Catalyzes the reductive methylation of 2'-deoxyuridine-5'-monophosphate (dUMP) to 2'-deoxythymidine-5'-monophosphate (dTMP) while utilizing 5,10-methylenetetrahydrofolate (mTHF) as the methyl donor and reductant in the reaction, yielding dihydrofolate (DHF) as a by-product. This enzymatic reaction provides an intracellular de novo source of dTMP, an essential precursor for DNA biosynthesis. This chain is Thymidylate synthase, found in Bacteroides thetaiotaomicron (strain ATCC 29148 / DSM 2079 / JCM 5827 / CCUG 10774 / NCTC 10582 / VPI-5482 / E50).